Reading from the N-terminus, the 174-residue chain is Large ribosomal subunit protein uL10 (174 aa).

The protein belongs to the universal ribosomal protein uL10 family. Part of the ribosomal stalk of the 50S ribosomal subunit. The N-terminus interacts with L11 and the large rRNA to form the base of the stalk. The C-terminus forms an elongated spine to which L12 dimers bind in a sequential fashion forming a multimeric L10(L12)X complex.

In terms of biological role, forms part of the ribosomal stalk, playing a central role in the interaction of the ribosome with GTP-bound translation factors. This Methylibium petroleiphilum (strain ATCC BAA-1232 / LMG 22953 / PM1) protein is Large ribosomal subunit protein uL10.